The chain runs to 523 residues: NADP-specific glutamate dehydrogenase (523 aa).

The disordered stretch occupies residues 26 to 50 (CARGRSAKRDVAAKRLRSRSPRMDA). The active site involves Lys-202.

This sequence belongs to the Glu/Leu/Phe/Val dehydrogenases family. Homo- and heterohexamer of alpha and beta subunits. Both subunits are encoded by the same gene. The N-termini of the alpha and the beta chains are blocked.

The protein localises to the plastid. The protein resides in the chloroplast. The enzyme catalyses L-glutamate + NADP(+) + H2O = 2-oxoglutarate + NH4(+) + NADPH + H(+). The polypeptide is NADP-specific glutamate dehydrogenase (Chlorella sorokiniana (Freshwater green alga)).